Consider the following 519-residue polypeptide: Probable WRKY transcription factor 33 (519 aa).

Disordered stretches follow at residues 1-34 (MAAS…STSS) and 123-212 (SSGV…CTFP). Residues 7–34 (TMDNSRTRQNMNGSANWSQQSGRTSTSS) show a composition bias toward polar residues. Residues 130 to 142 (TTTTTTTTTTTTT) show a composition bias toward low complexity. The span at 164 to 174 (TETRPNNQAVS) shows a compositional bias: polar residues. The segment covering 178–188 (REQRKGEDGYN) has biased composition (basic and acidic residues). Residues 178–242 (REQRKGEDGY…YKGSHNHPKP (65 aa)) constitute a DNA-binding region (WRKY 1). Zn(2+)-binding residues include cysteine 209, cysteine 214, histidine 237, and histidine 239. 2 disordered regions span residues 232-255 (VYKG…SSTF) and 267-349 (NRQA…REPR). Residues 245-254 (TRRSSSSSST) show a composition bias toward low complexity. A compositionally biased stretch (polar residues) spans 269 to 299 (QASSDQPNSNNSFHQSDSFGMQQEDNTTSDS). Basic and acidic residues predominate over residues 323 to 332 (PEAKRWKGDN). Residues 356-421 (SDIDILDDGY…YEGKHNHDVP (66 aa)) constitute a DNA-binding region (WRKY 2). The Zn(2+) site is built by cysteine 387, cysteine 392, histidine 416, and histidine 418.

This sequence belongs to the WRKY group I family. Interacts with MKS1. Interacts with ATG18A. Interacts with SIB1 and SIB2. Interacts with VQ1 and VQ10. In terms of processing, phosphorylated by MPK4. Phosphorylated on serine residues by MPK3 and MPK6 following infection with the necrotrophic fungal pathogen B.cinerea. Highly expressed in roots, leaves and flowers, and at lower levels in stems, siliques and seeds.

The protein resides in the nucleus. In terms of biological role, transcription factor. Interacts specifically with the W box (5'-TTGAC[CT]-3'), a frequently occurring elicitor-responsive cis-acting element. Involved in defense responses. Required for resistance to the necrotrophic fungal pathogen B.cinerea. Regulates the antagonistic relationship between defense pathways mediating responses to the bacterial pathogen P. syringae and the necrotrophic pathogen B.cinerea. Required for the phytoalexin camalexin synthesis following infection with B.cinerea. Acts as a positive regulator of the camalexin biosynthetic genes PAD3 (CYP71B15) and CYP71A13 by binding to their promoters. Acts downstream of MPK3 and MPK6 in reprogramming the expression of camalexin biosynthetic genes, which drives the metabolic flow to camalexin production. Functions with WRKY25 as positive regulator of salt stress response and abscisic acid (ABA) signaling. Functions with WRKY25 and WRKY26 as positive regulator of plant thermotolerance by partially participating in ethylene-response signal transduction pathway. The DNA-binding activity of WRKY33 is increased by SIB1 and SIB2. The protein is Probable WRKY transcription factor 33 (WRKY33) of Arabidopsis thaliana (Mouse-ear cress).